The chain runs to 286 residues: Single myb histone 5 (286 aa).

The HTH myb-type domain occupies 1 to 61 (MGAPKQRWTS…KWRNMNVIVT (61 aa)). Positions 28–57 (WRMILNDPELSSTLRYRSNVDLKDKWRNMN) form a DNA-binding region, H-T-H motif. The 69-residue stretch at 122–190 (SHSRLDNIIM…KVNRKYRIAP (69 aa)) folds into the H15 domain. Positions 229 to 277 (EAAAAAAAHAVAEAEAIMAEAEAAAREAEAAEAEARAAQAFAEAAVLTL) form a coiled coil.

It belongs to the histone H1/H5 family. SMH subfamily. As to quaternary structure, forms a homodimer and heterodimers.

It localises to the nucleus. It is found in the chromosome. The protein localises to the nucleolus. The protein resides in the telomere. Functionally, binds preferentially double-stranded telomeric repeats, but may also bind to the single telomeric strand. The chain is Single myb histone 5 (SMH5) from Zea mays (Maize).